The sequence spans 387 residues: Eukaryotic translation initiation factor 3 subunit M (387 aa).

Residues 181-340 form the PCI domain; it reads LSSKVMIELL…QKVHISSTMH (160 aa).

It belongs to the eIF-3 subunit M family. As to quaternary structure, component of the eukaryotic translation initiation factor 3 (eIF-3) complex. The eIF-3 complex interacts with pix.

The protein resides in the cytoplasm. It localises to the golgi apparatus. In terms of biological role, component of the eukaryotic translation initiation factor 3 (eIF-3) complex, which is involved in protein synthesis of a specialized repertoire of mRNAs and, together with other initiation factors, stimulates binding of mRNA and methionyl-tRNAi to the 40S ribosome. The eIF-3 complex specifically targets and initiates translation of a subset of mRNAs involved in cell proliferation. The protein is Eukaryotic translation initiation factor 3 subunit M of Drosophila sechellia (Fruit fly).